The primary structure comprises 495 residues: MFMSSFIMAIDQGTTSSRTCIINQAGGLVAEAREAFKQIFPKPGWVEHDPEDIWYSTQRSMRLALEKAKIKGSQIRTIGITNQRETVMLWDAKSGKALHNAIVWQCRRTQDLCEKLKKNKKEKIITAKTGLVLDPYFSATKIQWLLKNVPNAAKKAKDGQALAGTVDSFLLWKLTAGHSHKTDVSNASRTMLMNIHTGWWDEDLLKIFGVPEAILPEICPSNSDFGVTQGLGFMPDGIPITGIVGDQQAALFGQTCFETGDSKCTFGTGSFLLLNTGKKAVKSKNKLLTTIAWKLKNQEMTYALEGGAFVCGAAVQWLRDGLGLIQQSSDVEALAKTVDGTDGVEFVPALTGLGAPHWQPEARGLICGLTRGSTKAHIARATLEAMALQNVDILNTMQRDLGKKLRGVRVDGGAAANDLLMQMQADYCGANVVRPQNLETTALGAAFMAGLGAGVWKDLKEIKRVWKVNKEFKVKMTPKARKERLQRWAQALERV.

T14 is an ADP binding site. T14, T15, and S16 together coordinate ATP. T14 serves as a coordination point for sn-glycerol 3-phosphate. Position 18 (R18) interacts with ADP. Residues R84, E85, Y136, and D246 each coordinate sn-glycerol 3-phosphate. Glycerol contacts are provided by R84, E85, Y136, D246, and Q247. The ADP site is built by T268 and G312. 4 residues coordinate ATP: T268, G312, Q316, and G413. The ADP site is built by G413 and N417.

This sequence belongs to the FGGY kinase family.

The catalysed reaction is glycerol + ATP = sn-glycerol 3-phosphate + ADP + H(+). It participates in polyol metabolism; glycerol degradation via glycerol kinase pathway; sn-glycerol 3-phosphate from glycerol: step 1/1. With respect to regulation, inhibited by fructose 1,6-bisphosphate (FBP). Functionally, key enzyme in the regulation of glycerol uptake and metabolism. Catalyzes the phosphorylation of glycerol to yield sn-glycerol 3-phosphate. This is Glycerol kinase from Bdellovibrio bacteriovorus (strain ATCC 15356 / DSM 50701 / NCIMB 9529 / HD100).